The sequence spans 78 residues: uncharacterized protein (78 aa).

The next 2 membrane-spanning stretches (helical) occupy residues 13-35 (AGVGCVLMLMIIALVVFMLPTGI) and 50-72 (GTTFGILMLAALPPLTGAIFYYF).

The protein resides in the cell membrane. This is an uncharacterized protein from Pasteurella multocida (strain Pm70).